The following is a 432-amino-acid chain: Guanine/hypoxanthine permease PbuO (432 aa).

A run of 10 helical transmembrane segments spans residues 15–35 (IIAG…NPVI), 51–71 (IIAS…PIAI), 92–112 (GITY…FIIL), 133–153 (ITTG…GIVA), 174–194 (LVGL…ALFI), 196–216 (MAAT…KGFM), 234–254 (FGDV…LVTI), 340–360 (ALSG…SLMM), 379–399 (LVIL…LGFI), and 412–432 (REIH…LFIL).

This sequence belongs to the nucleobase:cation symporter-2 (NCS2) (TC 2.A.40) family. Azg-like subfamily.

It is found in the cell membrane. Involved in the uptake of the purine bases hypoxanthine and guanine. May work at purine concentrations higher than 100 uM. In Bacillus subtilis (strain 168), this protein is Guanine/hypoxanthine permease PbuO (pbuO).